Consider the following 130-residue polypeptide: Ribosome-binding factor A (130 aa).

It belongs to the RbfA family. In terms of assembly, monomer. Binds 30S ribosomal subunits, but not 50S ribosomal subunits or 70S ribosomes.

It is found in the cytoplasm. Functionally, one of several proteins that assist in the late maturation steps of the functional core of the 30S ribosomal subunit. Associates with free 30S ribosomal subunits (but not with 30S subunits that are part of 70S ribosomes or polysomes). Required for efficient processing of 16S rRNA. May interact with the 5'-terminal helix region of 16S rRNA. This is Ribosome-binding factor A from Prochlorococcus marinus (strain MIT 9215).